A 172-amino-acid chain; its full sequence is Translationally-controlled tumor protein homolog (172 aa).

One can recognise a TCTP domain in the interval 1–172; that stretch reads MIIFKDLLTG…FKHGLDEEKV (172 aa).

The protein belongs to the TCTP family. In terms of tissue distribution, expressed by the venom gland.

It is found in the secreted. Venom protein that causes edema, enhances vascular permeability and is likely related to the inflammatory activity of the venom. The sequence is that of Translationally-controlled tumor protein homolog from Loxosceles intermedia (Brown spider).